We begin with the raw amino-acid sequence, 225 residues long: Phosphoribosylformylglycinamidine synthase subunit PurQ (225 aa).

A Glutamine amidotransferase type-1 domain is found at 5–225 (SAVITFPGSN…ESVVRGLVEA (221 aa)). Cys89 acts as the Nucleophile in catalysis. Active-site residues include His197 and Glu199.

In terms of assembly, part of the FGAM synthase complex composed of 1 PurL, 1 PurQ and 2 PurS subunits.

It localises to the cytoplasm. The catalysed reaction is N(2)-formyl-N(1)-(5-phospho-beta-D-ribosyl)glycinamide + L-glutamine + ATP + H2O = 2-formamido-N(1)-(5-O-phospho-beta-D-ribosyl)acetamidine + L-glutamate + ADP + phosphate + H(+). The enzyme catalyses L-glutamine + H2O = L-glutamate + NH4(+). It participates in purine metabolism; IMP biosynthesis via de novo pathway; 5-amino-1-(5-phospho-D-ribosyl)imidazole from N(2)-formyl-N(1)-(5-phospho-D-ribosyl)glycinamide: step 1/2. In terms of biological role, part of the phosphoribosylformylglycinamidine synthase complex involved in the purines biosynthetic pathway. Catalyzes the ATP-dependent conversion of formylglycinamide ribonucleotide (FGAR) and glutamine to yield formylglycinamidine ribonucleotide (FGAM) and glutamate. The FGAM synthase complex is composed of three subunits. PurQ produces an ammonia molecule by converting glutamine to glutamate. PurL transfers the ammonia molecule to FGAR to form FGAM in an ATP-dependent manner. PurS interacts with PurQ and PurL and is thought to assist in the transfer of the ammonia molecule from PurQ to PurL. In Novosphingobium aromaticivorans (strain ATCC 700278 / DSM 12444 / CCUG 56034 / CIP 105152 / NBRC 16084 / F199), this protein is Phosphoribosylformylglycinamidine synthase subunit PurQ.